A 409-amino-acid chain; its full sequence is Elongation factor Tu, chloroplastic (409 aa).

In terms of domain architecture, tr-type G spans 10 to 214; that stretch reads KQHVNIGTIG…NVDTYIPTPV (205 aa). The interval 19 to 26 is G1; it reads GHVDHGKT. Residue 19–26 coordinates GTP; the sequence is GHVDHGKT. Position 26 (Thr-26) interacts with Mg(2+). The tract at residues 60 to 64 is G2; sequence GITIN. The segment at 81–84 is G3; sequence DCPG. GTP contacts are provided by residues 81–85 and 136–139; these read DCPGH and NKED. Positions 136–139 are G4; that stretch reads NKED. The interval 174–176 is G5; it reads SAL.

Belongs to the TRAFAC class translation factor GTPase superfamily. Classic translation factor GTPase family. EF-Tu/EF-1A subfamily.

It is found in the plastid. The protein localises to the chloroplast. The catalysed reaction is GTP + H2O = GDP + phosphate + H(+). Functionally, GTP hydrolase that promotes the GTP-dependent binding of aminoacyl-tRNA to the A-site of ribosomes during protein biosynthesis. The chain is Elongation factor Tu, chloroplastic (tufA) from Tupiella akineta (Green alga).